The chain runs to 337 residues: Peroxidase 14 (337 aa).

Positions 1–22 (MARIGSFLILLSLTYALTLCIC) are cleaved as a signal peptide. Asparagine 24 is a glycosylation site (N-linked (GlcNAc...) asparagine). 4 disulfide bridges follow: cysteine 44–cysteine 124, cysteine 77–cysteine 82, cysteine 130–cysteine 331, and cysteine 209–cysteine 241. Histidine 75 serves as the catalytic Proton acceptor. Residues aspartate 76, valine 79, glycine 81, aspartate 83, and serine 85 each contribute to the Ca(2+) site. A substrate-binding site is contributed by proline 172. The N-linked (GlcNAc...) asparagine glycan is linked to asparagine 191. Histidine 202 is a heme b binding site. Ca(2+) is bound at residue threonine 203. 2 N-linked (GlcNAc...) asparagine glycosylation sites follow: asparagine 218 and asparagine 249. Aspartate 254, serine 257, and aspartate 262 together coordinate Ca(2+).

This sequence belongs to the peroxidase family. Classical plant (class III) peroxidase subfamily. The cofactor is heme b. Ca(2+) serves as cofactor.

It is found in the secreted. It carries out the reaction 2 a phenolic donor + H2O2 = 2 a phenolic radical donor + 2 H2O. Its function is as follows. Removal of H(2)O(2), oxidation of toxic reductants, biosynthesis and degradation of lignin, suberization, auxin catabolism, response to environmental stresses such as wounding, pathogen attack and oxidative stress. These functions might be dependent on each isozyme/isoform in each plant tissue. In Arabidopsis thaliana (Mouse-ear cress), this protein is Peroxidase 14 (PER14).